The chain runs to 291 residues: Tryptophan synthase alpha chain (291 aa).

Catalysis depends on proton acceptor residues E69 and D80.

The protein belongs to the TrpA family. In terms of assembly, tetramer of two alpha and two beta chains.

It catalyses the reaction (1S,2R)-1-C-(indol-3-yl)glycerol 3-phosphate + L-serine = D-glyceraldehyde 3-phosphate + L-tryptophan + H2O. It participates in amino-acid biosynthesis; L-tryptophan biosynthesis; L-tryptophan from chorismate: step 5/5. In terms of biological role, the alpha subunit is responsible for the aldol cleavage of indoleglycerol phosphate to indole and glyceraldehyde 3-phosphate. The polypeptide is Tryptophan synthase alpha chain (Bifidobacterium longum (strain NCC 2705)).